Here is a 193-residue protein sequence, read N- to C-terminus: Cryptic protein (193 aa).

The N-terminal stretch at 1 to 25 is a signal peptide; the sequence is MFWRKHVRILFTVTLIWQAIHLGKG. 2 N-linked (GlcNAc...) asparagine glycosylation sites follow: Asn38 and Asn60. Disulfide bonds link Cys91-Cys103 and Cys105-Cys114. Positions 91 to 115 constitute an EGF-like domain; it reads CQNGGTCILGAFCACPKHFSGRHCE.

The protein belongs to the EGF-CFC (Cripto-1/FRL1/Cryptic) family.

Its subcellular location is the cell membrane. The protein resides in the secreted. In terms of biological role, may play a role in mesoderm and/or neural patterning during gastrulation. This chain is Cryptic protein (CFC1), found in Gallus gallus (Chicken).